The sequence spans 709 residues: MYYRTQQKPASVLGANGFTAEVGGRDRVRYFRPPVEVAGVPMRYSGIDTVRFSATAPTTPNLPRTFAETRFDRPTSMAAGLVGPPHHLPSLPRRAGAAPPHPVKAKSVKLPPQRTKRVEKLASTIGTDGKCDAAMQTVFRENEAQTLPYTPNYYIPEGGDPNPQVLGLMELHWNEGLPAGKEEVELIQRLRRRRAVEASLLDETSKEAKMENFCKLYDLEVKEREEREQHFENLRKRRLDQIHEALQERERARDELNRQRLEKVKEQRLANLQRVIEQMESKRVGMGRKALAEQASKAPAAAGRGLYAVDPIETFKRKPDLIQTYARRGTGAVEPQLCTNNGGGSASASPRRDRSRKPLRNYRQYDIQPAMLKYEGGIAELEANKIPKIQQIAPNAFAAPENHAINSLPSLYQRREATRVVEALEYVHAKIHKSDTPAETIRVLELYRATPRPQRPDTPTLELEGDVNEAVEESCTLLQRLLRGRAVQNDFFDGKERCRGLIEELQAASNAKYAERSAEEKQAEAEEKMREAIADSIGNEAQGDIICDTLDYLFHEMTRQQDLLALEALRHEAEAVRAEREAREAELRAQERILHDKEAVQYAAYVRAIEDIVECYSHDLYATVAEECAMEEAIEAECQRLEQLPPPTSNILSDPEVAENLVCDVLDNFVLPAVIDMVRMKPEELDRKAPAAAAAGFRQRSPNEKETKE.

Disordered regions lie at residues 94–116, 333–360, and 690–709; these read RAGA…QRTK, VEPQ…KPLR, and PAAA…ETKE.

Belongs to the CFAP91 family.

It is found in the cytoplasm. It localises to the cytoskeleton. The protein resides in the flagellum axoneme. Functionally, axoneme-associated protein involved in flagellum motility and central pair positioning. This chain is Cilia- and flagella-associated protein 91 (CFAP91), found in Trypanosoma brucei brucei (strain 927/4 GUTat10.1).